A 185-amino-acid polypeptide reads, in one-letter code: MISKIETETQSRMEKCTESFESQIKKIRTGRASPSILDSIQVEYYGASTPLRQLANIVAEDSSHLAVTVFDRNLTPYIEKAIQNSPLGLNPSSAANLIRVPLPPLTEDRRKELIKVIRSEAEAARVAVRNIRASVNKKSKETLKKKEISEDEDRQIQDNVQKLTDRYIKKIDEFLTKKEKEVMTV.

It belongs to the RRF family.

It localises to the cytoplasm. Functionally, responsible for the release of ribosomes from messenger RNA at the termination of protein biosynthesis. May increase the efficiency of translation by recycling ribosomes from one round of translation to another. In Hamiltonella defensa subsp. Acyrthosiphon pisum (strain 5AT), this protein is Ribosome-recycling factor.